A 287-amino-acid polypeptide reads, in one-letter code: Oxaloacetate decarboxylase (287 aa).

Substrate is bound at residue Ser-50. Asp-88 contacts Mg(2+). Residues Arg-159 and His-235 each coordinate substrate.

The protein belongs to the isocitrate lyase/PEP mutase superfamily. Oxaloacetate decarboxylase family. In terms of assembly, homotetramer; dimer of dimers. The cofactor is Mg(2+).

It carries out the reaction oxaloacetate + H(+) = pyruvate + CO2. Catalyzes the decarboxylation of oxaloacetate into pyruvate. Seems to play a role in maintaining cellular concentrations of bicarbonate and pyruvate. The sequence is that of Oxaloacetate decarboxylase from Marinomonas sp. (strain MWYL1).